We begin with the raw amino-acid sequence, 1621 residues long: ABC transporter A family member 2 (1621 aa).

7 consecutive transmembrane segments (helical) span residues 30-50 (ILFPIIVILVIFAILVLVMAF), 234-254 (SVFITAALMIFGFRLITDLVI), 276-296 (ISWMITSLVTALPVNLIISII), 309-329 (GVVIFTLILYLLTLLLLAFIL), 338-358 (FCGLLSFVIIIAINIGGIFVA), 365-385 (GAKLFLCLISPIAIACSIFAM), and 405-425 (NQVIGMLVLDIFFYIFLVWYL). Residues 484–717 (ISIRNLRKEY…FGCGYLLTCS (234 aa)) form the ABC transporter 1 domain. 520 to 527 (GPNGSGKS) serves as a coordination point for ATP. The next 7 helical transmembrane spans lie at 856 to 876 (FFLTLVIPLVFIIGSIIMYKA), 1033 to 1053 (IVYFIIIMMAGYALMAGSFAG), 1083 to 1103 (VWDYFFSFILILLTTCILAGI), 1111 to 1131 (FGLMFLCLILFCVSVVPLSYL), 1142 to 1162 (ATGAITAIHFAIGIIFVIISL), 1183 to 1203 (VDIVFCILSPLFAYSRILFLV), and 1227 to 1247 (GSPMIILAAHCIVWVSWIMIL). An ABC transporter 2 domain is found at 1293–1528 (LQFRNLHKLF…FGAGYTFDVK (236 aa)). Residue 1331–1338 (GLNGAGKT) participates in ATP binding.

It belongs to the ABC transporter superfamily. ABCA family.

The protein localises to the membrane. This chain is ABC transporter A family member 2 (abcA2), found in Dictyostelium discoideum (Social amoeba).